The sequence spans 214 residues: MIRVLVVDDHDLVRTGITRMLADIDGLQVVGQADSGEESLKKARELKPDVVLMDVKMPGIGGLEATRKLLRSHPDIKVVAVTVCEEDPFPTRLLQAGAAGYMTKGAGLAEMVQAIRLVFAGQRYISPQIAQQLALKSFQPQVNNSPFDLLSEREIQIALMIVGCQKVQTISDKLCLSPKTVNTYRYRIFEKLSISSDVELALLAVRHGMVDASA.

One can recognise a Response regulatory domain in the interval 3-119 (RVLVVDDHDL…EMVQAIRLVF (117 aa)). 4-aspartylphosphate is present on aspartate 54. Positions 143–208 (NNSPFDLLSE…ELALLAVRHG (66 aa)) constitute an HTH luxR-type domain. A DNA-binding region (H-T-H motif) is located at residues 167–186 (VQTISDKLCLSPKTVNTYRY).

Required for production of extracellular enzymes and fluorescent siderophores. The chain is Response regulator GacA (gacA) from Pseudomonas viridiflava (Phytomonas viridiflava).